A 163-amino-acid polypeptide reads, in one-letter code: 5-hydroxymethyl-dUMP N-hydrolase (163 aa).

Residue A2 is modified to N-acetylalanine. 5-hydroxymethyl-dUMP is bound at residue G16. Phosphoserine is present on S17. The 5-hydroxymethyl-dUMP site is built by I18, R19, G20, S87, G89, and E93. S87 bears the Phosphoserine mark. S112, S117, S127, and S158 each carry phosphoserine. Residue S117 coordinates 5-hydroxymethyl-dUMP.

In terms of assembly, monomer and homodimer. In terms of tissue distribution, highly expressed in heart, kidney, liver and spleen. Weakly expressed in lung and skeletal muscle.

The protein resides in the cytoplasm. It is found in the nucleus. The enzyme catalyses 5-hydroxymethyl-dUMP + H2O = 5-hydroxymethyluracil + 2-deoxy-D-ribose 5-phosphate. In terms of biological role, part of a nucleotide salvage pathway that eliminates epigenetically modified 5-hydroxymethyl-dCMP (hmdCMP) in a two-step process entailing deamination to cytotoxic 5-hydroxymethyl-dUMP (hmdUMP), followed by its hydrolysis into 5-hydroxymethyluracil (hmU) and 2-deoxy-D-ribose 5-phosphate (deoxyribosephosphate). Catalyzes the second step in that pathway, the hydrolysis of the N-glycosidic bond in hmdUMP, degrading this cytotoxic nucleotide to avoid its genomic integration. The polypeptide is 5-hydroxymethyl-dUMP N-hydrolase (Rattus norvegicus (Rat)).